The primary structure comprises 614 residues: BTB/POZ domain-containing protein At5g48800 (614 aa).

A BTB domain is found at 43–111; the sequence is SDITIEVNGG…CYGINFEITS (69 aa). One can recognise an NPH3 domain in the interval 219–484; sequence DWWIEDLSVL…VQVLYFEQLK (266 aa). The residue at position 425 (Tyr425) is a Phosphotyrosine. Disordered regions lie at residues 492-525 and 583-614; these read SYSD…KDNY and GHSS…ASTD. Polar residues predominate over residues 507–521; sequence SWRINSGALSATMSP. Residues 522 to 562 are a coiled coil; the sequence is KDNYASLRRENRELKLELARLRMRLNDLEKEHICMKRDMQR. A compositionally biased stretch (low complexity) spans 583-597; it reads GHSSSRGSSSPSKQS.

Belongs to the NPH3 family.

Its pathway is protein modification; protein ubiquitination. May act as a substrate-specific adapter of an E3 ubiquitin-protein ligase complex (CUL3-RBX1-BTB) which mediates the ubiquitination and subsequent proteasomal degradation of target proteins. The chain is BTB/POZ domain-containing protein At5g48800 from Arabidopsis thaliana (Mouse-ear cress).